The sequence spans 153 residues: uncharacterized protein (153 aa).

Belongs to the RusA family.

This is an uncharacterized protein from Xylella fastidiosa (strain Temecula1 / ATCC 700964).